Reading from the N-terminus, the 552-residue chain is uncharacterized protein (552 aa).

The disordered stretch occupies residues 1-59 (MPLEKTNTHDSTATVEDQEATDNPMHLTQSRMLDLAGNPNRTTSRQSETLFPNGVDLNY). Over residues 39 to 50 (PNRTTSRQSETL) the composition is skewed to polar residues. A run of 12 helical transmembrane segments spans residues 116 to 136 (ITIV…VIAG), 158 to 178 (LMVV…EMIG), 181 to 201 (IVYL…ALAP), 203 to 223 (IACL…PLTL), 238 to 258 (GLAI…GPLV), 271 to 291 (WIFW…LPVP), 345 to 365 (ILVC…GYFF), 383 to 403 (GLMF…TPFL), 424 to 444 (LVGM…FAWT), 450 to 470 (IWIG…LFYF), 484 to 506 (CASA…PLFI), and 519 to 539 (FFLL…FYLF).

Belongs to the major facilitator superfamily.

The protein localises to the membrane. This is an uncharacterized protein from Schizosaccharomyces pombe (strain 972 / ATCC 24843) (Fission yeast).